A 76-amino-acid chain; its full sequence is ATP synthase subunit c (76 aa).

A run of 2 helical transmembrane segments spans residues 13–33 (LSVI…GILF) and 55–75 (FIGL…ALII).

This sequence belongs to the ATPase C chain family. In terms of assembly, F-type ATPases have 2 components, F(1) - the catalytic core - and F(0) - the membrane proton channel. F(1) has five subunits: alpha(3), beta(3), gamma(1), delta(1), epsilon(1). F(0) has three main subunits: a(1), b(2) and c(10-14). The alpha and beta chains form an alternating ring which encloses part of the gamma chain. F(1) is attached to F(0) by a central stalk formed by the gamma and epsilon chains, while a peripheral stalk is formed by the delta and b chains.

It is found in the cell membrane. F(1)F(0) ATP synthase produces ATP from ADP in the presence of a proton or sodium gradient. F-type ATPases consist of two structural domains, F(1) containing the extramembraneous catalytic core and F(0) containing the membrane proton channel, linked together by a central stalk and a peripheral stalk. During catalysis, ATP synthesis in the catalytic domain of F(1) is coupled via a rotary mechanism of the central stalk subunits to proton translocation. Its function is as follows. Key component of the F(0) channel; it plays a direct role in translocation across the membrane. A homomeric c-ring of between 10-14 subunits forms the central stalk rotor element with the F(1) delta and epsilon subunits. This chain is ATP synthase subunit c, found in Bifidobacterium longum subsp. infantis (strain ATCC 15697 / DSM 20088 / JCM 1222 / NCTC 11817 / S12).